Reading from the N-terminus, the 168-residue chain is Chorismate pyruvate-lyase (168 aa).

Residues Met-36, Arg-78, Leu-116, and Glu-157 each coordinate substrate.

It belongs to the UbiC family. Monomer.

Its subcellular location is the cytoplasm. The enzyme catalyses chorismate = 4-hydroxybenzoate + pyruvate. The protein operates within cofactor biosynthesis; ubiquinone biosynthesis. In terms of biological role, removes the pyruvyl group from chorismate, with concomitant aromatization of the ring, to provide 4-hydroxybenzoate (4HB) for the ubiquinone pathway. The protein is Chorismate pyruvate-lyase of Photorhabdus laumondii subsp. laumondii (strain DSM 15139 / CIP 105565 / TT01) (Photorhabdus luminescens subsp. laumondii).